Consider the following 572-residue polypeptide: Transmembrane glycoprotein NMB (572 aa).

Residues 1-22 (MESLCGVLVFLLLAAGLPLQAA) form the signal peptide. At 23–500 (KRFRDVLGHE…DLGSPLRTVN (478 aa)) the chain is on the extracellular side. Residues asparagine 93, asparagine 134, asparagine 200, asparagine 249, asparagine 275, asparagine 296, asparagine 300, asparagine 306, and asparagine 312 are each glycosylated (N-linked (GlcNAc...) asparagine). The 88-residue stretch at 251 to 338 (SDETFLRDLP…SPSSSTSPSP (88 aa)) folds into the PKD domain. The disordered stretch occupies residues 321-359 (GPCPSPTPSPSSSTSPSPASSPSPTLSTPSPSLMPTGHK). Positions 330–356 (PSSSTSPSPASSPSPTLSTPSPSLMPT) are enriched in low complexity. Residues asparagine 461 and asparagine 469 are each glycosylated (N-linked (GlcNAc...) asparagine). A helical membrane pass occupies residues 501–521 (GVLISIGCLAMFVTMVTILLY). The Cytoplasmic segment spans residues 522–572 (KKHKTYKPIGNCTRNVVKGKGLSVFLSHAKAPFSRGDREKDPLLQDKPWML). Phosphoserine is present on serine 544. Positions 556 to 558 (RGD) match the Cell attachment site motif.

It belongs to the PMEL/NMB family.

The protein resides in the cell membrane. The protein localises to the melanosome membrane. It is found in the early endosome membrane. In terms of biological role, could be a melanogenic enzyme. In Rattus norvegicus (Rat), this protein is Transmembrane glycoprotein NMB (Gpnmb).